Reading from the N-terminus, the 161-residue chain is Transcriptional repressor NrdR (161 aa).

Residues Met-1 to Ser-11 are compositionally biased toward basic residues. Positions Met-1–Gly-21 are disordered. A zinc finger spans residues Cys-3 to Cys-34. Residues Val-49–Asp-139 form the ATP-cone domain.

Belongs to the NrdR family. Zn(2+) is required as a cofactor.

Negatively regulates transcription of bacterial ribonucleotide reductase nrd genes and operons by binding to NrdR-boxes. The polypeptide is Transcriptional repressor NrdR (Synechocystis sp. (strain ATCC 27184 / PCC 6803 / Kazusa)).